Consider the following 584-residue polypeptide: Vesicular glutamate transporter 2.1 (584 aa).

Topologically, residues 1 to 70 (METPREPAGF…CTCFGLPRRY (70 aa)) are cytoplasmic. Residues 71 to 91 (IIAIMSGLGFCISFGIRCNLG) traverse the membrane as a helical segment. The Vesicular portion of the chain corresponds to 92 to 124 (VAIVSMVNNSTIHLNGKIIIKEKAKFNWDPETV). Residues N99 and N100 are each glycosylated (N-linked (GlcNAc...) asparagine). The helical transmembrane segment at 125-145 (GLIHGSFFWGYIVTQIPGGYI) threads the bilayer. Residues 146–148 (SSR) are Cytoplasmic-facing. The helical transmembrane segment at 149 to 169 (LAANRVFGAAILLTSTLNMFI) threads the bilayer. Residues 170-177 (PSAARGHY) are Vesicular-facing. A helical membrane pass occupies residues 178–198 (GCVIFVRILQGLVEGVTYPAC). Residues 199-216 (HGIWSKWAPPLERSRLAT) lie on the Cytoplasmic side of the membrane. The chain crosses the membrane as a helical span at residues 217–237 (TSFCGSYAGAVIAMPLAGILV). Topologically, residues 238 to 244 (QYTGWSS) are vesicular. The helical transmembrane segment at 245-265 (VFYVYGCFGIFWYMFWILVSY) threads the bilayer. At 266-310 (ESPAEHPTITAEERCYIEESIGESAKLLGPADKFKTPWRKFFTSM) the chain is on the cytoplasmic side. A helical transmembrane segment spans residues 311-331 (PVYAIIVANFCRSWTFYLLLI). At 332-349 (SQPAYFEEVFGFEISKVG) the chain is on the vesicular side. Residues 350 to 370 (MLSALPHLVMTIIVPIGGQLA) form a helical membrane-spanning segment. Residues 371 to 386 (DHLRSKNILSTTTVRK) lie on the Cytoplasmic side of the membrane. The helical transmembrane segment at 387 to 407 (IMNCGGFGMEATLLLIVGYSH) threads the bilayer. At 408 to 409 (SK) the chain is on the vesicular side. A helical membrane pass occupies residues 410 to 430 (GVAISFLVLAVGFSGFAISGF). Over 431-445 (NVNHLDIAPRYASIL) the chain is Cytoplasmic. A helical membrane pass occupies residues 446–466 (MGISNGVGTLSGMVCPLIVGA). At 467–477 (MTKHKTREEWQ) the chain is on the vesicular side. The helical transmembrane segment at 478-498 (YVFLIASLVHYGGVIFYGIFA) threads the bilayer. Over 499–584 (SGEKQPWADP…YGYRQGGNYS (86 aa)) the chain is Cytoplasmic.

The protein belongs to the major facilitator superfamily. Sodium/anion cotransporter family. VGLUT subfamily. In terms of tissue distribution, expressed in spinal cord and retinal ganglion cells.

The protein resides in the cytoplasmic vesicle. It localises to the secretory vesicle. The protein localises to the synaptic vesicle membrane. It is found in the membrane. Its subcellular location is the synapse. The protein resides in the synaptosome. It localises to the cell membrane. It carries out the reaction L-glutamate(out) = L-glutamate(in). The catalysed reaction is 3 Na(+)(out) + phosphate(out) = 3 Na(+)(in) + phosphate(in). It catalyses the reaction phosphate(in) = phosphate(out). The enzyme catalyses K(+)(in) + H(+)(out) = K(+)(out) + H(+)(in). It carries out the reaction chloride(in) = chloride(out). Chloride channel activity is allosterically activated by lumenal H(+) and Cl(-) leading to synaptic vesicles acidification. The L-glutamate transport activity is allosterically activated by lumenal H(+) and Cl(-). The allosteric requirement for H(+) efficiently prevents non-vesicular efflux across the plasma membrane. The L-glutamate uniporter activity exhibits a biphasic dependence on chloride concentration. Multifunctional transporter that transports L-glutamate as well as multiple ions such as chloride, proton, potassium, sodium and phosphate. At the synaptic vesicle membrane, mainly functions as a uniporter which transports preferentially L-glutamate but also, phosphate from the cytoplasm into synaptic vesicles at presynaptic nerve terminals of excitatory neural cells. The L-glutamate or phosphate uniporter activity is electrogenic and is driven by the proton electrochemical gradient, mainly by the electrical gradient established by the vacuolar H(+)-ATPase across the synaptic vesicle membrane. In addition, functions as a chloride channel that allows a chloride permeation through the synaptic vesicle membrane therefore affects the proton electrochemical gradient and promotes synaptic vesicles acidification. Moreover, functions as a vesicular K(+)/H(+) antiport allowing to maintain the electrical gradient and to decrease chemical gradient and therefore sustain vesicular L-glutamate uptake. The vesicular H(+)/H(+) antiport activity is electroneutral. At the plasma membrane, following exocytosis, functions as a symporter of Na(+) and phosphate from the extracellular space to the cytoplasm allowing synaptic phosphate homeostasis regulation. The symporter activity is driven by an inside negative membrane potential and is electrogenic. Also involved in the regulation of retinal hyaloid vessel regression during postnatal development. May also play a role in the endocrine L-glutamatergic system of other tissues such as pineal gland and pancreas. Required for glutamate release by retinotectal synapses and visual acuity. The chain is Vesicular glutamate transporter 2.1 (slc17a6b) from Danio rerio (Zebrafish).